A 54-amino-acid chain; its full sequence is Large ribosomal subunit protein bL33 (54 aa).

Belongs to the bacterial ribosomal protein bL33 family.

In Corynebacterium jeikeium (strain K411), this protein is Large ribosomal subunit protein bL33.